The sequence spans 1066 residues: DNA-directed RNA polymerase subunit beta (1066 aa).

Belongs to the RNA polymerase beta chain family. In plastids the minimal PEP RNA polymerase catalytic core is composed of four subunits: alpha, beta, beta', and beta''. When a (nuclear-encoded) sigma factor is associated with the core the holoenzyme is formed, which can initiate transcription.

The protein resides in the plastid. Its subcellular location is the chloroplast. It carries out the reaction RNA(n) + a ribonucleoside 5'-triphosphate = RNA(n+1) + diphosphate. DNA-dependent RNA polymerase catalyzes the transcription of DNA into RNA using the four ribonucleoside triphosphates as substrates. This chain is DNA-directed RNA polymerase subunit beta, found in Coffea arabica (Arabian coffee).